The sequence spans 172 residues: Protein YdeJ (172 aa).

Belongs to the CinA family.

Its function is as follows. Does not have nicotinamide-nucleotide (NMN) amidohydrolase activity. This chain is Protein YdeJ (ydeJ), found in Escherichia coli (strain K12).